Reading from the N-terminus, the 428-residue chain is Light-independent protochlorophyllide reductase subunit N (428 aa).

Cys-29, Cys-54, and Cys-115 together coordinate [4Fe-4S] cluster.

This sequence belongs to the BchN/ChlN family. Protochlorophyllide reductase is composed of three subunits; BchL, BchN and BchB. Forms a heterotetramer of two BchB and two BchN subunits. It depends on [4Fe-4S] cluster as a cofactor.

It carries out the reaction chlorophyllide a + oxidized 2[4Fe-4S]-[ferredoxin] + 2 ADP + 2 phosphate = protochlorophyllide a + reduced 2[4Fe-4S]-[ferredoxin] + 2 ATP + 2 H2O. It functions in the pathway porphyrin-containing compound metabolism; bacteriochlorophyll biosynthesis (light-independent). Functionally, component of the dark-operative protochlorophyllide reductase (DPOR) that uses Mg-ATP and reduced ferredoxin to reduce ring D of protochlorophyllide (Pchlide) to form chlorophyllide a (Chlide). This reaction is light-independent. The NB-protein (BchN-BchB) is the catalytic component of the complex. The protein is Light-independent protochlorophyllide reductase subunit N of Cereibacter sphaeroides (strain ATCC 17023 / DSM 158 / JCM 6121 / CCUG 31486 / LMG 2827 / NBRC 12203 / NCIMB 8253 / ATH 2.4.1.) (Rhodobacter sphaeroides).